Here is a 321-residue protein sequence, read N- to C-terminus: MAVYTDITEDDLKWFLTEYDVGTLLSYKGIAEGVENSNFLLHTSRDPLILTLYEKRVEKNDLPFFLGLMQHLASRGLSCPLPLPRRDGELLGHLSGRPAALISFLEGMWLRKPEAKHCREVGKALAAMHVAGEGFDIKRPNALSLAGWQGLWEKSEARADEVEPGLQDEIRGELDFLGSHWPKDLPDGVIHADLFPDNVFFLGDELSGLIDFYFACNDQLAYDVSICLNAWCFEKDGAYNITKGMALLEGYQSVRPLSDAEIAALPTLSRGSALRFFLTRLYDWLTTPAGAMVTKKDPLEYLRKLRFHRQIASSAEYGLKA.

It belongs to the pseudomonas-type ThrB family.

It carries out the reaction L-homoserine + ATP = O-phospho-L-homoserine + ADP + H(+). The protein operates within amino-acid biosynthesis; L-threonine biosynthesis; L-threonine from L-aspartate: step 4/5. The chain is Homoserine kinase from Rhizobium rhizogenes (strain K84 / ATCC BAA-868) (Agrobacterium radiobacter).